A 218-amino-acid polypeptide reads, in one-letter code: MANSSPVYDWFQERLEIQDIADDIGSKYVPPHVNIFYCLGGITLVCFLIQFATGFAMTFYYKPTVAEAYKSVEYLMTDVSFGWLIRSVHRWSASMMVLMLILHVFRVYLTGGFKRPRELTWVTGVTMAVITVSFGVTGYSLPWDQVGYWAVKIVSGVPAAIPVVGDFMVELLRGGESVGQATLTRFYSLHTFVMPWLLAVFMLMHFLMIRKQGISGPL.

The helical transmembrane segment at 35–55 (IFYCLGGITLVCFLIQFATGF) threads the bilayer. Residue Cys-38 coordinates heme c. Residues His-89 and His-103 each contribute to the heme b site. The next 3 membrane-spanning stretches (helical) occupy residues 93-113 (ASMM…TGGF), 119-139 (LTWV…VTGY), and 189-209 (LHTF…FLMI). The heme b site is built by His-190 and His-205.

Belongs to the cytochrome b family. PetB subfamily. In terms of assembly, the 4 large subunits of the cytochrome b6-f complex are cytochrome b6, subunit IV (17 kDa polypeptide, PetD), cytochrome f and the Rieske protein, while the 4 small subunits are PetG, PetL, PetM and PetN. The complex functions as a dimer. Heme b is required as a cofactor. Heme c serves as cofactor.

It is found in the cellular thylakoid membrane. Functionally, component of the cytochrome b6-f complex, which mediates electron transfer between photosystem II (PSII) and photosystem I (PSI), cyclic electron flow around PSI, and state transitions. In Synechococcus sp. (strain CC9605), this protein is Cytochrome b6.